Here is a 974-residue protein sequence, read N- to C-terminus: Bifunctional glutamine synthetase adenylyltransferase/adenylyl-removing enzyme (974 aa).

The interval 1–464 (MKNAFLKTQL…HYAALFENEQ (464 aa)) is adenylyl removase. Residues 468-974 (LEIGNLVFTG…YSIFKQVMKY (507 aa)) form an adenylyl transferase region.

The protein belongs to the GlnE family. Requires Mg(2+) as cofactor.

The enzyme catalyses [glutamine synthetase]-O(4)-(5'-adenylyl)-L-tyrosine + phosphate = [glutamine synthetase]-L-tyrosine + ADP. The catalysed reaction is [glutamine synthetase]-L-tyrosine + ATP = [glutamine synthetase]-O(4)-(5'-adenylyl)-L-tyrosine + diphosphate. Involved in the regulation of glutamine synthetase GlnA, a key enzyme in the process to assimilate ammonia. When cellular nitrogen levels are high, the C-terminal adenylyl transferase (AT) inactivates GlnA by covalent transfer of an adenylyl group from ATP to specific tyrosine residue of GlnA, thus reducing its activity. Conversely, when nitrogen levels are low, the N-terminal adenylyl removase (AR) activates GlnA by removing the adenylyl group by phosphorolysis, increasing its activity. The regulatory region of GlnE binds the signal transduction protein PII (GlnB) which indicates the nitrogen status of the cell. The polypeptide is Bifunctional glutamine synthetase adenylyltransferase/adenylyl-removing enzyme (Bartonella henselae (strain ATCC 49882 / DSM 28221 / CCUG 30454 / Houston 1) (Rochalimaea henselae)).